We begin with the raw amino-acid sequence, 117 residues long: Non-specific lipid-transfer protein 1 (117 aa).

The first 26 residues, 1–26 (MARAQVLLMAAALVLMLTAAPRAAVA), serve as a signal peptide directing secretion. 4 cysteine pairs are disulfide-bonded: Cys-29–Cys-76, Cys-39–Cys-53, Cys-54–Cys-99, and Cys-74–Cys-113. Asp-33 is lipidated: Cis-14-hydroxy-10,13-dioxo-7-heptadecenoic acid aspartate ester.

This sequence belongs to the plant LTP family. As to expression, aleurone layer of developing and germinating seeds.

Plant non-specific lipid-transfer proteins transfer phospholipids as well as galactolipids across membranes. May play a role in wax or cutin deposition in the cell walls of expanding epidermal cells and certain secretory tissues. The protein is Non-specific lipid-transfer protein 1 (LTP1) of Hordeum vulgare (Barley).